A 405-amino-acid chain; its full sequence is S-adenosylmethionine synthase (405 aa).

141–146 is a binding site for ATP; it reads GQGSVD.

This sequence belongs to the AdoMet synthase 2 family. Requires Mg(2+) as cofactor.

It catalyses the reaction L-methionine + ATP + H2O = S-adenosyl-L-methionine + phosphate + diphosphate. It participates in amino-acid biosynthesis; S-adenosyl-L-methionine biosynthesis; S-adenosyl-L-methionine from L-methionine: step 1/1. Functionally, catalyzes the formation of S-adenosylmethionine from methionine and ATP. The protein is S-adenosylmethionine synthase of Methanococcus maripaludis (strain C7 / ATCC BAA-1331).